Reading from the N-terminus, the 87-residue chain is Large ribosomal subunit protein bL27 (87 aa).

The protein belongs to the bacterial ribosomal protein bL27 family.

The protein is Large ribosomal subunit protein bL27 of Renibacterium salmoninarum (strain ATCC 33209 / DSM 20767 / JCM 11484 / NBRC 15589 / NCIMB 2235).